Reading from the N-terminus, the 149-residue chain is Transcriptional regulator MraZ (149 aa).

2 consecutive SpoVT-AbrB domains span residues 6–52 and 81–124; these read HAHR…TPPD and SEEV…DKRE.

The protein belongs to the MraZ family. As to quaternary structure, forms oligomers.

Its subcellular location is the cytoplasm. It localises to the nucleoid. The chain is Transcriptional regulator MraZ from Maridesulfovibrio salexigens (strain ATCC 14822 / DSM 2638 / NCIMB 8403 / VKM B-1763) (Desulfovibrio salexigens).